A 60-amino-acid chain; its full sequence is Homeobox protein engrailed-like A (60 aa).

A DNA-binding region (homeobox) is located at residues 1–41 (ADQLARLRAEFQANRYLTEERRQNLARELSLNEAQIKIWFQ).

This sequence belongs to the engrailed homeobox family.

It localises to the nucleus. The polypeptide is Homeobox protein engrailed-like A (Myxine glutinosa (Atlantic hagfish)).